Reading from the N-terminus, the 108-residue chain is MCIGIPLQVLECAPGRALCGDDREARWIDTRLIEPPAPGDWLLVFLGAAREALDAERAAQIRDALCALQAVQAGDLAALDGLFADLDREPQLPPHLQAQLPPKEPNSP.

Residues 88–108 (REPQLPPHLQAQLPPKEPNSP) are disordered.

The protein belongs to the HupF/HypC family.

The chain is Hydrogenase expression/formation protein HupN (hupN) from Azotobacter chroococcum mcd 1.